The following is a 677-amino-acid chain: Serine/threonine-protein kinase YPK2/YKR2 (677 aa).

The span at 1–12 (MHSWRISKFKLG) shows a compositional bias: basic residues. The segment at 1-115 (MHSWRISKFK…ETQGPSSESG (115 aa)) is disordered. Over residues 41–56 (KHHDGSPKNHNHEHEH) the composition is skewed to basic and acidic residues. 2 stretches are compositionally biased toward polar residues: residues 61–93 (INTN…NDNS) and 101–115 (SQSS…SESG). A phosphothreonine mark is found at Thr63 and Thr66. Position 72 is a phosphoserine (Ser72). The Protein kinase domain occupies 344-599 (FDLLKVIGKG…TDEIRNHPFF (256 aa)). ATP is bound by residues 350-358 (IGKGSFGKV) and Lys373. Asp467 acts as the Proton acceptor in catalysis. Thr499 carries the post-translational modification Phosphothreonine. At Thr501 the chain carries Phosphothreonine; by PKH2. One can recognise an AGC-kinase C-terminal domain in the interval 600-670 (KDISWKKLLL…IGDEQLGDSP (71 aa)). Ser641 is subject to Phosphoserine; by TOR2. A Phosphoserine modification is found at Ser650. Thr659 carries the phosphothreonine; by TOR2 modification. Position 669 is a phosphoserine (Ser669).

Belongs to the protein kinase superfamily. AGC Ser/Thr protein kinase family. RAC subfamily. Post-translationally, autophosphorylated. Phosphorylated by PKH2 and TOR2.

Its subcellular location is the cytoplasm. It catalyses the reaction L-seryl-[protein] + ATP = O-phospho-L-seryl-[protein] + ADP + H(+). It carries out the reaction L-threonyl-[protein] + ATP = O-phospho-L-threonyl-[protein] + ADP + H(+). Activated by phytosphingosine (PHS), a sphingoid long chain base. Activated by PKH2 phosphorylation. Kinase activity is regulated by TOR2 via direct phosphorylation of Ser-641 and Thr-659. Plays an essential role in the proliferation of yeast cells. Involved in a signaling pathway, required for optimal cell wall integrity, that acts in parallel with the PKC1-SLT2-dependent pathway. A substrate of TOR complex 2 (TORC2) and required for TORC2 to regulate spatial aspects of cell growth. Phosphorylation of residue Thr-501 is indispensable for function. May act as a downstream kinase in the sphingolipid-mediated signaling pathway. The sequence is that of Serine/threonine-protein kinase YPK2/YKR2 (YPK2) from Saccharomyces cerevisiae (strain ATCC 204508 / S288c) (Baker's yeast).